The following is a 331-amino-acid chain: Isopenicillin N synthase (331 aa).

Positions 87, 91, 183, and 189 each coordinate isopenicillin N. The N-[(5S)-5-amino-5-carboxypentanoyl]-L-cysteinyl-D-valine site is built by arginine 87, tyrosine 91, serine 183, tyrosine 189, histidine 214, and aspartate 216. Positions 181 to 288 (LSSVVLIRYP…RQSLPFFVNL (108 aa)) constitute a Fe2OG dioxygenase domain. Fe(2+) is bound by residues histidine 214, aspartate 216, and histidine 270. Arginine 279 contacts 2-oxoglutarate. Serine 281 lines the isopenicillin N pocket. N-[(5S)-5-amino-5-carboxypentanoyl]-L-cysteinyl-D-valine is bound at residue serine 281.

It belongs to the iron/ascorbate-dependent oxidoreductase family. Requires Fe(2+) as cofactor.

The protein resides in the cytoplasm. Its subcellular location is the cytosol. The catalysed reaction is N-[(5S)-5-amino-5-carboxypentanoyl]-L-cysteinyl-D-valine + O2 = isopenicillin N + 2 H2O. The protein operates within antibiotic biosynthesis; penicillin G biosynthesis; penicillin G from L-alpha-aminoadipate and L-cysteine and L-valine: step 2/3. Functionally, isopenicillin N synthase; part of the gene cluster that mediates the biosynthesis of penicillin, the world's most important antibiotic. The first step of the pathway is performed by the trimodular NRPS acvA that produces the tripeptide N-[(5S)-5-amino-5-carboxypentanoyl]-L-cysteinyl-D-valine (LLD-ACV or ACV) via condensation of the 3 residues L-2-aminoadipate, L-cysteine and L-valine. The precursor amino acids for penicillin biosynthesis are withdrawn from the vacuolar amino acid pool by the MFS-type transporter penV. Each of the constituent amino acids of the tripeptide acv are activated as aminoacyl-adenylates with peptide bonds formed through the participation of amino acid thioester intermediates. The tripeptide ACV is then cyclized to form isopenicillin N (IPN) by the isopenicillin N synthase ipnA that forms the beta-lactam nucleus. Finally, the alpha-aminoadipyl side chain is exchanged for phenylacetic acid by the isopenicillin N acyltransferase aatA to yield penicillin. This step occurs in the peroxisomal matrix and the penM and paaT transporters are involved in the isopenicillin N and phenylacetic acid import into the peroxisome, respectively. The polypeptide is Isopenicillin N synthase (Penicillium rubens (strain ATCC 28089 / DSM 1075 / NRRL 1951 / Wisconsin 54-1255) (Penicillium chrysogenum)).